The primary structure comprises 574 residues: Intraflagellar transport protein 56 homolog (574 aa).

TPR repeat units lie at residues 20-52, 57-90, and 151-184; these read AQKM…GNLD, DSLQ…DDAP, and LEDR…SPNL.

It belongs to the IFT56 family. As to quaternary structure, component of the IFT complex B composed of at least che-2, che-13, dyf-1, dyf-3, dyf-6, dyf-11, dyf-13, ift-20, ift-74, ift-81, ifta-2, osm-1, osm-5 and osm-6.

The protein resides in the cell projection. The protein localises to the cilium. Its function is as follows. Component of the intraflagellar transport (IFT) complex B required for transport of proteins in the motile cilium. May be required for ciliary entrance and transport of specific ciliary cargo proteins such as che-3 which are related to motility. This Caenorhabditis elegans protein is Intraflagellar transport protein 56 homolog.